The chain runs to 219 residues: Elongation factor Ts (219 aa).

The interval 81-84 is involved in Mg(2+) ion dislocation from EF-Tu; the sequence is SDFV.

The protein belongs to the EF-Ts family.

It is found in the cytoplasm. In terms of biological role, associates with the EF-Tu.GDP complex and induces the exchange of GDP to GTP. It remains bound to the aminoacyl-tRNA.EF-Tu.GTP complex up to the GTP hydrolysis stage on the ribosome. In Koribacter versatilis (strain Ellin345), this protein is Elongation factor Ts.